The primary structure comprises 72 residues: Translation initiation factor IF-1 (72 aa).

The 72-residue stretch at 1–72 (MAKEEQIELE…TKGRITFRMK (72 aa)) folds into the S1-like domain.

It belongs to the IF-1 family. Component of the 30S ribosomal translation pre-initiation complex which assembles on the 30S ribosome in the order IF-2 and IF-3, IF-1 and N-formylmethionyl-tRNA(fMet); mRNA recruitment can occur at any time during PIC assembly.

The protein localises to the cytoplasm. In terms of biological role, one of the essential components for the initiation of protein synthesis. Stabilizes the binding of IF-2 and IF-3 on the 30S subunit to which N-formylmethionyl-tRNA(fMet) subsequently binds. Helps modulate mRNA selection, yielding the 30S pre-initiation complex (PIC). Upon addition of the 50S ribosomal subunit IF-1, IF-2 and IF-3 are released leaving the mature 70S translation initiation complex. The polypeptide is Translation initiation factor IF-1 (Alcanivorax borkumensis (strain ATCC 700651 / DSM 11573 / NCIMB 13689 / SK2)).